Reading from the N-terminus, the 204-residue chain is Cytochrome c biogenesis ATP-binding export protein CcmA (204 aa).

One can recognise an ABC transporter domain in the interval 2 to 203 (LEADNLECVR…PAGTVRELRL (202 aa)). 34–41 (GRNGAGKT) is an ATP binding site.

The protein belongs to the ABC transporter superfamily. CcmA exporter (TC 3.A.1.107) family. As to quaternary structure, the complex is composed of two ATP-binding proteins (CcmA) and two transmembrane proteins (CcmB).

It localises to the cell inner membrane. The catalysed reaction is heme b(in) + ATP + H2O = heme b(out) + ADP + phosphate + H(+). Part of the ABC transporter complex CcmAB involved in the biogenesis of c-type cytochromes; once thought to export heme, this seems not to be the case, but its exact role is uncertain. Responsible for energy coupling to the transport system. The protein is Cytochrome c biogenesis ATP-binding export protein CcmA of Dechloromonas aromatica (strain RCB).